A 187-amino-acid polypeptide reads, in one-letter code: MSRLVKKPIPYPENVKVSYDEKEHKVTVEGPKGKLELNIHPDIKVTLNQQERWIKLDRPSDRSFHKAIHGTMAALIKNMIKGVTEGFTEILEIHGLGYRAQLKGNVLELHLGKSHPDIYPIPPDVKIEVKGNEIHIHGIDKQRVGQVAAEIRSFRKPDPYKGKGIRYKGEQLSSNPERLQVRSKEVR.

A disordered region spans residues 159-187 (PYKGKGIRYKGEQLSSNPERLQVRSKEVR).

The protein belongs to the universal ribosomal protein uL6 family. Part of the 50S ribosomal subunit.

Its function is as follows. This protein binds to the 23S rRNA, and is important in its secondary structure. It is located near the subunit interface in the base of the L7/L12 stalk, and near the tRNA binding site of the peptidyltransferase center. In Aquifex pyrophilus, this protein is Large ribosomal subunit protein uL6.